We begin with the raw amino-acid sequence, 215 residues long: UPF0502 protein PSEEN2299 (215 aa).

The protein belongs to the UPF0502 family.

In Pseudomonas entomophila (strain L48), this protein is UPF0502 protein PSEEN2299.